The chain runs to 282 residues: Bifunctional protein FolD (282 aa).

NADP(+) contacts are provided by residues 164 to 166, isoleucine 189, and isoleucine 230; that span reads GAS.

Belongs to the tetrahydrofolate dehydrogenase/cyclohydrolase family. As to quaternary structure, homodimer.

The catalysed reaction is (6R)-5,10-methylene-5,6,7,8-tetrahydrofolate + NADP(+) = (6R)-5,10-methenyltetrahydrofolate + NADPH. It carries out the reaction (6R)-5,10-methenyltetrahydrofolate + H2O = (6R)-10-formyltetrahydrofolate + H(+). Its pathway is one-carbon metabolism; tetrahydrofolate interconversion. Its function is as follows. Catalyzes the oxidation of 5,10-methylenetetrahydrofolate to 5,10-methenyltetrahydrofolate and then the hydrolysis of 5,10-methenyltetrahydrofolate to 10-formyltetrahydrofolate. This Nitratiruptor sp. (strain SB155-2) protein is Bifunctional protein FolD.